A 163-amino-acid chain; its full sequence is Small ribosomal subunit protein bS18c (163 aa).

Disordered stretches follow at residues 1–52 (MYIS…IGPG) and 144–163 (NLRN…SSDC). Positions 7 to 48 (PFRKSKQPFRKSKQTFHKSKQPFRKFKQPFRKSKQPFRRRSR) are enriched in basic residues.

It belongs to the bacterial ribosomal protein bS18 family. In terms of assembly, part of the 30S ribosomal subunit.

The protein resides in the plastid. The protein localises to the chloroplast. The sequence is that of Small ribosomal subunit protein bS18c from Sorghum bicolor (Sorghum).